The sequence spans 345 residues: Holliday junction branch migration complex subunit RuvB (345 aa).

The large ATPase domain (RuvB-L) stretch occupies residues 1-182 (MDQRIIASSS…FGIVQRLEFY (182 aa)). ATP contacts are provided by residues I21, R22, G63, K66, T67, T68, 129-131 (EDF), R172, Y182, and R219. Residue T67 coordinates Mg(2+). The tract at residues 183 to 253 (SPQELTRIVI…VAQAAMQMLK (71 aa)) is small ATPAse domain (RuvB-S). Residues 256 to 345 (PEGFDELDRR…PGIGEPGDLF (90 aa)) are head domain (RuvB-H). DNA is bound by residues R292, R311, and R316.

The protein belongs to the RuvB family. As to quaternary structure, homohexamer. Forms an RuvA(8)-RuvB(12)-Holliday junction (HJ) complex. HJ DNA is sandwiched between 2 RuvA tetramers; dsDNA enters through RuvA and exits via RuvB. An RuvB hexamer assembles on each DNA strand where it exits the tetramer. Each RuvB hexamer is contacted by two RuvA subunits (via domain III) on 2 adjacent RuvB subunits; this complex drives branch migration. In the full resolvosome a probable DNA-RuvA(4)-RuvB(12)-RuvC(2) complex forms which resolves the HJ.

It is found in the cytoplasm. The catalysed reaction is ATP + H2O = ADP + phosphate + H(+). The RuvA-RuvB-RuvC complex processes Holliday junction (HJ) DNA during genetic recombination and DNA repair, while the RuvA-RuvB complex plays an important role in the rescue of blocked DNA replication forks via replication fork reversal (RFR). RuvA specifically binds to HJ cruciform DNA, conferring on it an open structure. The RuvB hexamer acts as an ATP-dependent pump, pulling dsDNA into and through the RuvAB complex. RuvB forms 2 homohexamers on either side of HJ DNA bound by 1 or 2 RuvA tetramers; 4 subunits per hexamer contact DNA at a time. Coordinated motions by a converter formed by DNA-disengaged RuvB subunits stimulates ATP hydrolysis and nucleotide exchange. Immobilization of the converter enables RuvB to convert the ATP-contained energy into a lever motion, pulling 2 nucleotides of DNA out of the RuvA tetramer per ATP hydrolyzed, thus driving DNA branch migration. The RuvB motors rotate together with the DNA substrate, which together with the progressing nucleotide cycle form the mechanistic basis for DNA recombination by continuous HJ branch migration. Branch migration allows RuvC to scan DNA until it finds its consensus sequence, where it cleaves and resolves cruciform DNA. The sequence is that of Holliday junction branch migration complex subunit RuvB from Xanthomonas oryzae pv. oryzae (strain MAFF 311018).